We begin with the raw amino-acid sequence, 129 residues long: Large ribosomal subunit protein bL17 (129 aa).

The protein belongs to the bacterial ribosomal protein bL17 family. Part of the 50S ribosomal subunit. Contacts protein L32.

The polypeptide is Large ribosomal subunit protein bL17 (Acidovorax ebreus (strain TPSY) (Diaphorobacter sp. (strain TPSY))).